A 132-amino-acid polypeptide reads, in one-letter code: Protein KRTCAP2 homolog (132 aa).

4 consecutive transmembrane segments (helical) span residues 1 to 21, 35 to 55, 69 to 89, and 92 to 109; these read MAVP…LIFS, MATV…LTAV, AKLF…CGMV, and VCAT…YYIN.

The protein belongs to the KRTCAP2 family. Component of the oligosaccharyltransferase (OST) complex.

The protein localises to the membrane. Subunit of the oligosaccharyl transferase (OST) complex that catalyzes the initial transfer of a defined glycan (Glc(3)Man(9)GlcNAc(2) in eukaryotes) from the lipid carrier dolichol-pyrophosphate to an asparagine residue within an Asn-X-Ser/Thr consensus motif in nascent polypeptide chains, the first step in protein N-glycosylation. N-glycosylation occurs cotranslationally and the complex associates with the Sec61 complex at the channel-forming translocon complex that mediates protein translocation across the endoplasmic reticulum (ER). All subunits are required for a maximal enzyme activity. The chain is Protein KRTCAP2 homolog from Aedes aegypti (Yellowfever mosquito).